We begin with the raw amino-acid sequence, 372 residues long: Dual-specificity RNA methyltransferase RlmN (372 aa).

The active-site Proton acceptor is the Glu93. The 240-residue stretch at Glu99–Asp338 folds into the Radical SAM core domain. Cysteines 106 and 343 form a disulfide. Cys113, Cys117, and Cys120 together coordinate [4Fe-4S] cluster. Residues Gly167–Glu168, Ser199, Ser221–His223, and Asn300 contribute to the S-adenosyl-L-methionine site. Cys343 (S-methylcysteine intermediate) is an active-site residue.

It belongs to the radical SAM superfamily. RlmN family. [4Fe-4S] cluster serves as cofactor.

The protein resides in the cytoplasm. It carries out the reaction adenosine(2503) in 23S rRNA + 2 reduced [2Fe-2S]-[ferredoxin] + 2 S-adenosyl-L-methionine = 2-methyladenosine(2503) in 23S rRNA + 5'-deoxyadenosine + L-methionine + 2 oxidized [2Fe-2S]-[ferredoxin] + S-adenosyl-L-homocysteine. The catalysed reaction is adenosine(37) in tRNA + 2 reduced [2Fe-2S]-[ferredoxin] + 2 S-adenosyl-L-methionine = 2-methyladenosine(37) in tRNA + 5'-deoxyadenosine + L-methionine + 2 oxidized [2Fe-2S]-[ferredoxin] + S-adenosyl-L-homocysteine. Specifically methylates position 2 of adenine 2503 in 23S rRNA and position 2 of adenine 37 in tRNAs. m2A2503 modification seems to play a crucial role in the proofreading step occurring at the peptidyl transferase center and thus would serve to optimize ribosomal fidelity. This chain is Dual-specificity RNA methyltransferase RlmN, found in Psychromonas ingrahamii (strain DSM 17664 / CCUG 51855 / 37).